Reading from the N-terminus, the 186-residue chain is Methyl-CpG-binding domain protein 3-like 1 (186 aa).

Residues 1–104 form a transcription repressor region; it reads MGKTSQRKQC…TSTDTVASAS (104 aa).

The protein belongs to the MBD3L family. In terms of tissue distribution, highly expressed in testis. Not detected in the other tissues tested.

It is found in the nucleus. Functionally, transcriptional repressor. The protein is Methyl-CpG-binding domain protein 3-like 1 (Mbd3l1) of Mus musculus (Mouse).